The sequence spans 188 residues: Elongation factor P (188 aa).

It belongs to the elongation factor P family.

It localises to the cytoplasm. It functions in the pathway protein biosynthesis; polypeptide chain elongation. In terms of biological role, involved in peptide bond synthesis. Stimulates efficient translation and peptide-bond synthesis on native or reconstituted 70S ribosomes in vitro. Probably functions indirectly by altering the affinity of the ribosome for aminoacyl-tRNA, thus increasing their reactivity as acceptors for peptidyl transferase. This chain is Elongation factor P, found in Sulfurovum sp. (strain NBC37-1).